We begin with the raw amino-acid sequence, 497 residues long: Signal recognition particle receptor FtsY (497 aa).

Disordered stretches follow at residues 1 to 63 (MAKE…TEAE) and 79 to 130 (AESE…EWQA). Over residues 87–96 (EAEVVAQPEP) the composition is skewed to low complexity. GTP-binding positions include 300 to 307 (GVNGVGKT), 382 to 386 (DTAGR), and 446 to 449 (TKLD).

It belongs to the GTP-binding SRP family. FtsY subfamily. Part of the signal recognition particle protein translocation system, which is composed of SRP and FtsY. SRP is a ribonucleoprotein composed of Ffh and a 4.5S RNA molecule. Binds to SecY. Proteolytically cleaved. The cleavage may regulate function and subcellular location of FtsY. Full-length FtsY is found primarily associated with the membrane, while cleaved protein is predominantly present in the cytoplasm.

It localises to the cell inner membrane. The protein localises to the cytoplasm. The enzyme catalyses GTP + H2O = GDP + phosphate + H(+). Its activity is regulated as follows. Conformation of the Ffh-FtsY complex and regulation of its GTPase activity are modulated by the 4.5S RNA. Formation of the FfH-FtsY complex leads to a mutual stimulation of both GTPases. Its function is as follows. Involved in targeting and insertion of nascent membrane proteins into the cytoplasmic membrane. Acts as a receptor for the complex formed by the signal recognition particle (SRP) and the ribosome-nascent chain (RNC). Interaction with SRP-RNC leads to the transfer of the RNC complex to the Sec translocase for insertion into the membrane, the hydrolysis of GTP by both Ffh and FtsY, and the dissociation of the SRP-FtsY complex into the individual components. The protein is Signal recognition particle receptor FtsY of Escherichia coli (strain K12).